The primary structure comprises 210 residues: Thiamine-phosphate synthase (210 aa).

4-amino-2-methyl-5-(diphosphooxymethyl)pyrimidine-binding positions include 34–38 and Asn-66; that span reads QLRHK. The Mg(2+) site is built by Asp-67 and Asp-86. Ser-105 lines the 4-amino-2-methyl-5-(diphosphooxymethyl)pyrimidine pocket. Residue 131-133 participates in 2-[(2R,5Z)-2-carboxy-4-methylthiazol-5(2H)-ylidene]ethyl phosphate binding; the sequence is TSS. Lys-134 contacts 4-amino-2-methyl-5-(diphosphooxymethyl)pyrimidine. 2-[(2R,5Z)-2-carboxy-4-methylthiazol-5(2H)-ylidene]ethyl phosphate is bound at residue Gly-162.

It belongs to the thiamine-phosphate synthase family. It depends on Mg(2+) as a cofactor.

The catalysed reaction is 2-[(2R,5Z)-2-carboxy-4-methylthiazol-5(2H)-ylidene]ethyl phosphate + 4-amino-2-methyl-5-(diphosphooxymethyl)pyrimidine + 2 H(+) = thiamine phosphate + CO2 + diphosphate. The enzyme catalyses 2-(2-carboxy-4-methylthiazol-5-yl)ethyl phosphate + 4-amino-2-methyl-5-(diphosphooxymethyl)pyrimidine + 2 H(+) = thiamine phosphate + CO2 + diphosphate. It catalyses the reaction 4-methyl-5-(2-phosphooxyethyl)-thiazole + 4-amino-2-methyl-5-(diphosphooxymethyl)pyrimidine + H(+) = thiamine phosphate + diphosphate. It functions in the pathway cofactor biosynthesis; thiamine diphosphate biosynthesis; thiamine phosphate from 4-amino-2-methyl-5-diphosphomethylpyrimidine and 4-methyl-5-(2-phosphoethyl)-thiazole: step 1/1. Condenses 4-methyl-5-(beta-hydroxyethyl)thiazole monophosphate (THZ-P) and 2-methyl-4-amino-5-hydroxymethyl pyrimidine pyrophosphate (HMP-PP) to form thiamine monophosphate (TMP). This is Thiamine-phosphate synthase from Chlorobium limicola (strain DSM 245 / NBRC 103803 / 6330).